The following is a 367-amino-acid chain: tRNA(Ile)-lysidine synthase, chloroplastic (367 aa).

Position 64–69 (64–69 (SGGQDS)) interacts with ATP.

This sequence belongs to the tRNA(Ile)-lysidine synthase family.

The protein localises to the plastid. It localises to the chloroplast. It carries out the reaction cytidine(34) in tRNA(Ile2) + L-lysine + ATP = lysidine(34) in tRNA(Ile2) + AMP + diphosphate + H(+). Functionally, ligates lysine onto the cytidine present at position 34 of the AUA codon-specific tRNA(Ile) that contains the anticodon CAU, in an ATP-dependent manner. Cytidine is converted to lysidine, thus changing the amino acid specificity of the tRNA from methionine to isoleucine. In Nephroselmis olivacea (Green alga), this protein is tRNA(Ile)-lysidine synthase, chloroplastic.